Consider the following 154-residue polypeptide: AP-1 complex subunit sigma-3 (154 aa).

This sequence belongs to the adaptor complexes small subunit family. Adaptor protein complex 1 (AP-1) is a heterotetramer composed of two large adaptins (gamma-type subunit AP1G1 and beta-type subunit AP1B1), a medium adaptin (mu-type subunit AP1M1 or AP1M2) and a small adaptin (sigma-type subunit AP1S1 or AP1S2 or AP1S3).

The protein resides in the golgi apparatus. It is found in the cytoplasmic vesicle membrane. It localises to the membrane. Its subcellular location is the clathrin-coated pit. Functionally, subunit of clathrin-associated adaptor protein complex 1 that plays a role in protein sorting in the late-Golgi/trans-Golgi network (TGN) and/or endosomes. The AP complexes mediate both the recruitment of clathrin to membranes and the recognition of sorting signals within the cytosolic tails of transmembrane cargo molecules. Involved in TLR3 trafficking. In Mus musculus (Mouse), this protein is AP-1 complex subunit sigma-3 (Ap1s3).